The sequence spans 135 residues: PTS system sorbose-specific EIIA component (135 aa).

A PTS EIIA type-4 domain is found at 1–131; sequence MVHAIFCAHG…CVVWQQPETV (131 aa). Residue histidine 9 is the Tele-phosphohistidine intermediate of the active site. Position 9 is a phosphohistidine; by HPr (histidine 9).

It is found in the cytoplasm. The phosphoenolpyruvate-dependent sugar phosphotransferase system (PTS), a major carbohydrate active transport system, catalyzes the phosphorylation of incoming sugar substrates concomitant with their translocation across the cell membrane. The enzyme II SorABFM PTS system is involved in L-sorbose transport. The sequence is that of PTS system sorbose-specific EIIA component from Klebsiella pneumoniae.